Consider the following 323-residue polypeptide: Cobalamin biosynthesis protein CobD (323 aa).

The next 5 membrane-spanning stretches (helical) occupy residues 52–72 (IAGVLLLALTVTSAASVTWLM), 73–93 (VWGSARLHALAGLMVAALLSS), 154–174 (DGIIAPLFWLALGGPVAGMAF), 214–234 (ALLMVMVAPLIGLSQANAASI), and 294–314 (IRLMYATTLAMAVISLATAAL).

This sequence belongs to the CobD/CbiB family.

Its subcellular location is the cell membrane. The protein operates within cofactor biosynthesis; adenosylcobalamin biosynthesis. Its function is as follows. Converts cobyric acid to cobinamide by the addition of aminopropanol on the F carboxylic group. The sequence is that of Cobalamin biosynthesis protein CobD from Pelobacter propionicus (strain DSM 2379 / NBRC 103807 / OttBd1).